We begin with the raw amino-acid sequence, 279 residues long: Pleckstrin homology domain-containing family F member 1 (279 aa).

The PH domain occupies 35-131; the sequence is VLLGEGVLTK…WISHIEECVR (97 aa). The segment at 152 to 212 adopts an FYVE-type zinc-finger fold; the sequence is DKATDICMRC…VCSLCYRELA (61 aa). Residues Cys158, Cys161, Cys175, Cys178, Cys183, Cys186, Cys204, and Cys207 each coordinate Zn(2+). Positions 220–263 are disordered; it reads AREGIGGSPPQLSHLGGTVCGASSGDDDDSDEDREGNGDGDWPT. Residues 244–253 show a composition bias toward acidic residues; it reads GDDDDSDEDR.

Widely expressed.

The protein localises to the nucleus. It is found in the cytoplasm. Its subcellular location is the perinuclear region. The protein resides in the lysosome. Its function is as follows. May induce apoptosis through the lysosomal-mitochondrial pathway. Translocates to the lysosome initiating the permeabilization of lysosomal membrane (LMP) and resulting in the release of CTSD and CTSL to the cytoplasm. Triggers the caspase-independent apoptosis by altering mitochondrial membrane permeabilization (MMP) resulting in the release of PDCD8. This is Pleckstrin homology domain-containing family F member 1 (Plekhf1) from Mus musculus (Mouse).